We begin with the raw amino-acid sequence, 311 residues long: Probable deoxyhypusine synthase (311 aa).

Lys284 (nucleophile) is an active-site residue.

It belongs to the deoxyhypusine synthase family. It depends on NAD(+) as a cofactor.

The enzyme catalyses [eIF5A protein]-L-lysine + spermidine = [eIF5A protein]-deoxyhypusine + propane-1,3-diamine. Its pathway is protein modification; eIF5A hypusination. In terms of biological role, catalyzes the NAD-dependent oxidative cleavage of spermidine and the subsequent transfer of the butylamine moiety of spermidine to the epsilon-amino group of a specific lysine residue of the eIF-5A precursor protein to form the intermediate deoxyhypusine residue. The polypeptide is Probable deoxyhypusine synthase (dys) (Sulfurisphaera tokodaii (strain DSM 16993 / JCM 10545 / NBRC 100140 / 7) (Sulfolobus tokodaii)).